Consider the following 227-residue polypeptide: Cytochrome c oxidase subunit 2 (227 aa).

Residues 1–26 (MNTWMNFNLQNSNSPLMEQLMFFHNH) are Mitochondrial intermembrane-facing. Residues 27–48 (SMLIILLITILVGYIMSSLLYN) traverse the membrane as a helical segment. The Mitochondrial matrix portion of the chain corresponds to 49 to 62 (KLYNRYLLESQNVE). A helical transmembrane segment spans residues 63 to 82 (IIWTILPAFMLIFIALPSLR). Topologically, residues 83–227 (LLYLLDDSNS…SFIKWISSNS (145 aa)) are mitochondrial intermembrane. Residues His161, Cys196, Glu198, Cys200, His204, and Met207 each contribute to the Cu cation site. Mg(2+) is bound at residue Glu198.

This sequence belongs to the cytochrome c oxidase subunit 2 family. As to quaternary structure, component of the cytochrome c oxidase (complex IV, CIV), a multisubunit enzyme composed of a catalytic core of 3 subunits and several supernumerary subunits. The complex exists as a monomer or a dimer and forms supercomplexes (SCs) in the inner mitochondrial membrane with ubiquinol-cytochrome c oxidoreductase (cytochrome b-c1 complex, complex III, CIII). It depends on Cu cation as a cofactor.

It localises to the mitochondrion inner membrane. The catalysed reaction is 4 Fe(II)-[cytochrome c] + O2 + 8 H(+)(in) = 4 Fe(III)-[cytochrome c] + 2 H2O + 4 H(+)(out). Component of the cytochrome c oxidase, the last enzyme in the mitochondrial electron transport chain which drives oxidative phosphorylation. The respiratory chain contains 3 multisubunit complexes succinate dehydrogenase (complex II, CII), ubiquinol-cytochrome c oxidoreductase (cytochrome b-c1 complex, complex III, CIII) and cytochrome c oxidase (complex IV, CIV), that cooperate to transfer electrons derived from NADH and succinate to molecular oxygen, creating an electrochemical gradient over the inner membrane that drives transmembrane transport and the ATP synthase. Cytochrome c oxidase is the component of the respiratory chain that catalyzes the reduction of oxygen to water. Electrons originating from reduced cytochrome c in the intermembrane space (IMS) are transferred via the dinuclear copper A center (CU(A)) of subunit 2 and heme A of subunit 1 to the active site in subunit 1, a binuclear center (BNC) formed by heme A3 and copper B (CU(B)). The BNC reduces molecular oxygen to 2 water molecules using 4 electrons from cytochrome c in the IMS and 4 protons from the mitochondrial matrix. The sequence is that of Cytochrome c oxidase subunit 2 (COII) from Ctenocephalides felis (Cat flea).